A 565-amino-acid chain; its full sequence is Formate--tetrahydrofolate ligase (565 aa).

Residue 73–80 (TPAGEGKS) participates in ATP binding.

The protein belongs to the formate--tetrahydrofolate ligase family.

It catalyses the reaction (6S)-5,6,7,8-tetrahydrofolate + formate + ATP = (6R)-10-formyltetrahydrofolate + ADP + phosphate. It functions in the pathway one-carbon metabolism; tetrahydrofolate interconversion. In Arthrobacter sp. (strain FB24), this protein is Formate--tetrahydrofolate ligase.